We begin with the raw amino-acid sequence, 390 residues long: Transcription factor bHLH76 (390 aa).

The tract at residues 147–217 is disordered; that stretch reads NVSEDSQSSG…SEKQPSDSLK (71 aa). The segment covering 207-217 has biased composition (basic and acidic residues); it reads NSEKQPSDSLK. Residues 229–279 form the bHLH domain; that stretch reads QATNSHSLAERVRREKISERMKFLQDLVPGCDKVTGKAVMLDEIINYVQSL.

In terms of assembly, homodimer. Interacts with IBH1. Binds reversibly to CRY2 after blue light illumination. Expressed constitutively in roots, leaves, stems, and flowers.

The protein resides in the nucleus. Its function is as follows. Transcriptional activator involved in cell elongation. Regulates the expression of a subset of genes involved in cell expansion by binding to the G-box motif. Binds to chromatin DNA of the FT gene and promotes its expression, and thus triggers flowering in response to blue light. This Arabidopsis thaliana (Mouse-ear cress) protein is Transcription factor bHLH76 (BHLH76).